The primary structure comprises 252 residues: 3-deoxy-manno-octulosonate cytidylyltransferase (252 aa).

This sequence belongs to the KdsB family.

The protein localises to the cytoplasm. The enzyme catalyses 3-deoxy-alpha-D-manno-oct-2-ulosonate + CTP = CMP-3-deoxy-beta-D-manno-octulosonate + diphosphate. Its pathway is nucleotide-sugar biosynthesis; CMP-3-deoxy-D-manno-octulosonate biosynthesis; CMP-3-deoxy-D-manno-octulosonate from 3-deoxy-D-manno-octulosonate and CTP: step 1/1. It participates in bacterial outer membrane biogenesis; lipopolysaccharide biosynthesis. Activates KDO (a required 8-carbon sugar) for incorporation into bacterial lipopolysaccharide in Gram-negative bacteria. This Nitratidesulfovibrio vulgaris (strain ATCC 29579 / DSM 644 / CCUG 34227 / NCIMB 8303 / VKM B-1760 / Hildenborough) (Desulfovibrio vulgaris) protein is 3-deoxy-manno-octulosonate cytidylyltransferase.